The sequence spans 860 residues: Protein argonaute-3 (860 aa).

One can recognise a PAZ domain in the interval 230–349 (PVIQFMCEVL…LPLEVCNIVA (120 aa)). The region spanning 518–819 (LIIVILPGKT…VAFRARYHLV (302 aa)) is the Piwi domain. The interaction with guide RNA stretch occupies residues 530–567 (YAEVKRAGDTLLGMATQCVQVKNVIKTSPQTLSNLCLK). The a divalent metal cation site is built by Asp598, Glu638, and Asp670. The segment at 758 to 805 (QGTSRPSHYHVLWDDNCFTADELQLLTYQLCHTYVRCTRSVSIPAPAY) is interaction with guide RNA. His808 provides a ligand contact to a divalent metal cation.

Belongs to the argonaute family. Ago subfamily.

It localises to the cytoplasm. The protein resides in the P-body. It catalyses the reaction Endonucleolytic cleavage to 5'-phosphomonoester.. Required for RNA-mediated gene silencing (RNAi). Binds to short RNAs such as microRNAs (miRNAs) and represses the translation of mRNAs which are complementary to them. Possesses RNA slicer activity but only on select RNAs bearing 5'- and 3'-flanking sequences to the region of guide-target complementarity. This chain is Protein argonaute-3 (AGO3), found in Gallus gallus (Chicken).